A 525-amino-acid chain; its full sequence is Peptide chain release factor 3 (525 aa).

The 269-residue stretch at 11–279 (DKRRTFAIIS…TYLEYAPQPA (269 aa)) folds into the tr-type G domain. GTP is bound by residues 20–27 (SHPDAGKT), 88–92 (DTPGH), and 142–145 (NKLD).

It belongs to the TRAFAC class translation factor GTPase superfamily. Classic translation factor GTPase family. PrfC subfamily.

The protein resides in the cytoplasm. Its function is as follows. Increases the formation of ribosomal termination complexes and stimulates activities of RF-1 and RF-2. It binds guanine nucleotides and has strong preference for UGA stop codons. It may interact directly with the ribosome. The stimulation of RF-1 and RF-2 is significantly reduced by GTP and GDP, but not by GMP. In Levilactobacillus brevis (strain ATCC 367 / BCRC 12310 / CIP 105137 / JCM 1170 / LMG 11437 / NCIMB 947 / NCTC 947) (Lactobacillus brevis), this protein is Peptide chain release factor 3.